Consider the following 156-residue polypeptide: uncharacterized protein (156 aa).

Positions 1-145 (MIIRKFSSKD…DAILMIKKKP (145 aa)) constitute an N-acetyltransferase domain.

The protein belongs to the acetyltransferase family.

The protein resides in the cytoplasm. This is an uncharacterized protein from Methanocaldococcus jannaschii (strain ATCC 43067 / DSM 2661 / JAL-1 / JCM 10045 / NBRC 100440) (Methanococcus jannaschii).